The chain runs to 464 residues: ATP-dependent protease ATPase subunit HslU (464 aa).

Residues V18, 60-65, D277, E342, and R414 contribute to the ATP site; that span reads GVGKTE.

This sequence belongs to the ClpX chaperone family. HslU subfamily. A double ring-shaped homohexamer of HslV is capped on each side by a ring-shaped HslU homohexamer. The assembly of the HslU/HslV complex is dependent on binding of ATP.

The protein resides in the cytoplasm. Its function is as follows. ATPase subunit of a proteasome-like degradation complex; this subunit has chaperone activity. The binding of ATP and its subsequent hydrolysis by HslU are essential for unfolding of protein substrates subsequently hydrolyzed by HslV. HslU recognizes the N-terminal part of its protein substrates and unfolds these before they are guided to HslV for hydrolysis. The sequence is that of ATP-dependent protease ATPase subunit HslU from Lactobacillus delbrueckii subsp. bulgaricus (strain ATCC BAA-365 / Lb-18).